A 332-amino-acid polypeptide reads, in one-letter code: 4-hydroxy-3-methylbut-2-enyl diphosphate reductase (332 aa).

Cysteine 13 is a binding site for [4Fe-4S] cluster. Histidine 41 and histidine 75 together coordinate (2E)-4-hydroxy-3-methylbut-2-enyl diphosphate. Dimethylallyl diphosphate is bound by residues histidine 41 and histidine 75. Positions 41 and 75 each coordinate isopentenyl diphosphate. Cysteine 97 lines the [4Fe-4S] cluster pocket. Histidine 125 serves as a coordination point for (2E)-4-hydroxy-3-methylbut-2-enyl diphosphate. Dimethylallyl diphosphate is bound at residue histidine 125. Histidine 125 lines the isopentenyl diphosphate pocket. Glutamate 127 acts as the Proton donor in catalysis. Threonine 168 provides a ligand contact to (2E)-4-hydroxy-3-methylbut-2-enyl diphosphate. Residue cysteine 229 participates in [4Fe-4S] cluster binding. Positions 257, 258, 259, and 306 each coordinate (2E)-4-hydroxy-3-methylbut-2-enyl diphosphate. Dimethylallyl diphosphate-binding residues include serine 257, serine 258, asparagine 259, and serine 306. Serine 257, serine 258, asparagine 259, and serine 306 together coordinate isopentenyl diphosphate.

This sequence belongs to the IspH family. It depends on [4Fe-4S] cluster as a cofactor.

It catalyses the reaction isopentenyl diphosphate + 2 oxidized [2Fe-2S]-[ferredoxin] + H2O = (2E)-4-hydroxy-3-methylbut-2-enyl diphosphate + 2 reduced [2Fe-2S]-[ferredoxin] + 2 H(+). The catalysed reaction is dimethylallyl diphosphate + 2 oxidized [2Fe-2S]-[ferredoxin] + H2O = (2E)-4-hydroxy-3-methylbut-2-enyl diphosphate + 2 reduced [2Fe-2S]-[ferredoxin] + 2 H(+). Its pathway is isoprenoid biosynthesis; dimethylallyl diphosphate biosynthesis; dimethylallyl diphosphate from (2E)-4-hydroxy-3-methylbutenyl diphosphate: step 1/1. The protein operates within isoprenoid biosynthesis; isopentenyl diphosphate biosynthesis via DXP pathway; isopentenyl diphosphate from 1-deoxy-D-xylulose 5-phosphate: step 6/6. Its function is as follows. Catalyzes the conversion of 1-hydroxy-2-methyl-2-(E)-butenyl 4-diphosphate (HMBPP) into a mixture of isopentenyl diphosphate (IPP) and dimethylallyl diphosphate (DMAPP). Acts in the terminal step of the DOXP/MEP pathway for isoprenoid precursor biosynthesis. The polypeptide is 4-hydroxy-3-methylbut-2-enyl diphosphate reductase (Chlorobaculum tepidum (strain ATCC 49652 / DSM 12025 / NBRC 103806 / TLS) (Chlorobium tepidum)).